The primary structure comprises 247 residues: MADS-box protein defh21 (247 aa).

An MADS-box domain is found at 1-61 (MGRGKIEVKR…GKLTEYCTPP (61 aa)). One can recognise a K-box domain in the interval 91-183 (NDQVIKELTR…WLMSNQIQRQ (93 aa)).

As to expression, expressed exclusively in a few inner cell layers of the inner integuments of the ovules.

Its subcellular location is the nucleus. Probable transcription factor. The polypeptide is MADS-box protein defh21 (DEFH21) (Antirrhinum majus (Garden snapdragon)).